Reading from the N-terminus, the 281-residue chain is 2,3,4,5-tetrahydropyridine-2,6-dicarboxylate N-succinyltransferase (281 aa).

Substrate is bound by residues arginine 108 and aspartate 145.

The protein belongs to the transferase hexapeptide repeat family. As to quaternary structure, homotrimer.

It localises to the cytoplasm. It catalyses the reaction (S)-2,3,4,5-tetrahydrodipicolinate + succinyl-CoA + H2O = (S)-2-succinylamino-6-oxoheptanedioate + CoA. Its pathway is amino-acid biosynthesis; L-lysine biosynthesis via DAP pathway; LL-2,6-diaminopimelate from (S)-tetrahydrodipicolinate (succinylase route): step 1/3. The sequence is that of 2,3,4,5-tetrahydropyridine-2,6-dicarboxylate N-succinyltransferase from Rhodopseudomonas palustris (strain BisB5).